Here is a 141-residue protein sequence, read N- to C-terminus: MRQRTIVCPLIQNDGCYLLCKMADNRGVFPGQWALSGGGVEPGERIEEALRREIREELGEQLILSDITPWTFRDDIRIKTYADGRQEEIYMIYLIFDCVSANRDICINDEFQDYAWVKPEELALYDLNVATRHTLALKGLL.

The region spanning 1-141 (MRQRTIVCPL…RHTLALKGLL (141 aa)) is the Nudix hydrolase domain. The short motif at 38 to 59 (GGVEPGERIEEALRREIREELG) is the Nudix box element.

This sequence belongs to the Nudix hydrolase family. NudI subfamily. In terms of assembly, monomer. Requires Mg(2+) as cofactor.

It carries out the reaction a ribonucleoside 5'-triphosphate + H2O = a ribonucleoside 5'-phosphate + diphosphate + H(+). The enzyme catalyses a 2'-deoxyribonucleoside 5'-triphosphate + H2O = a 2'-deoxyribonucleoside 5'-phosphate + diphosphate + H(+). The catalysed reaction is dUTP + H2O = dUMP + diphosphate + H(+). It catalyses the reaction dTTP + H2O = dTMP + diphosphate + H(+). It carries out the reaction dCTP + H2O = dCMP + diphosphate + H(+). In terms of biological role, catalyzes the hydrolysis of nucleoside triphosphates, with a preference for pyrimidine deoxynucleoside triphosphates (dUTP, dTTP and dCTP). This chain is Nucleoside triphosphatase NudI, found in Salmonella paratyphi B (strain ATCC BAA-1250 / SPB7).